The chain runs to 465 residues: Protein DML1 (465 aa).

This sequence belongs to the misato family.

Its subcellular location is the mitochondrion. Its function is as follows. Involved in the partitioning of the mitochondrial organelle and mitochondrial DNA (mtDNA) inheritance. In Eremothecium gossypii (strain ATCC 10895 / CBS 109.51 / FGSC 9923 / NRRL Y-1056) (Yeast), this protein is Protein DML1 (DML1).